Consider the following 80-residue polypeptide: Small ribosomal subunit protein bS16 (80 aa).

The protein belongs to the bacterial ribosomal protein bS16 family.

This chain is Small ribosomal subunit protein bS16, found in Hydrogenovibrio crunogenus (strain DSM 25203 / XCL-2) (Thiomicrospira crunogena).